Reading from the N-terminus, the 270-residue chain is Tryptophan synthase alpha chain (270 aa).

Residues glutamate 49 and aspartate 60 each act as proton acceptor in the active site.

It belongs to the TrpA family. Tetramer of two alpha and two beta chains.

The enzyme catalyses (1S,2R)-1-C-(indol-3-yl)glycerol 3-phosphate + L-serine = D-glyceraldehyde 3-phosphate + L-tryptophan + H2O. It participates in amino-acid biosynthesis; L-tryptophan biosynthesis; L-tryptophan from chorismate: step 5/5. In terms of biological role, the alpha subunit is responsible for the aldol cleavage of indoleglycerol phosphate to indole and glyceraldehyde 3-phosphate. This Buchnera aphidicola subsp. Melaphis rhois protein is Tryptophan synthase alpha chain.